The following is an 87-amino-acid chain: X protein (87 aa).

A nuclear export signal region spans residues 5–16 (LRLTLLELVRRL). A disordered region spans residues 18–87 (GNATIESGRL…PANRKGAAVE (70 aa)). The span at 36 to 48 (DTTTGTTGVTKTT) shows a compositional bias: low complexity.

Interacts with P and N proteins. These interactions presumably promote nuclear targeting of the X protein in infected cells. Interacts with host MAVS; this interaction inhibits MAVS-induced apoptosis. Phosphorylated.

It localises to the host nucleus. It is found in the host mitochondrion. Plays an essential role in the inhibition of host apoptosis. Mediates host mitochondria-mediated apoptosis through interaction with the mitochondrial antiviral signaling protein/MAVS and thereby promotes viral persistence in host central nervous system. Within the host nucleus, regulates viral RNA synthesis and polymerase complex assembly. This chain is X protein (P/X), found in Borna disease virus 1 (BoDV-1).